A 362-amino-acid polypeptide reads, in one-letter code: 3-dehydroquinate synthase (362 aa).

NAD(+) contacts are provided by residues 72–77 (DGEQYK), 106–110 (GVVGD), 130–131 (TT), Lys-143, Lys-152, and 170–173 (CLKT). Positions 185, 248, and 265 each coordinate Zn(2+).

It belongs to the sugar phosphate cyclases superfamily. Dehydroquinate synthase family. Requires Co(2+) as cofactor. Zn(2+) is required as a cofactor. The cofactor is NAD(+).

It is found in the cytoplasm. It carries out the reaction 7-phospho-2-dehydro-3-deoxy-D-arabino-heptonate = 3-dehydroquinate + phosphate. It functions in the pathway metabolic intermediate biosynthesis; chorismate biosynthesis; chorismate from D-erythrose 4-phosphate and phosphoenolpyruvate: step 2/7. Functionally, catalyzes the conversion of 3-deoxy-D-arabino-heptulosonate 7-phosphate (DAHP) to dehydroquinate (DHQ). This Aliivibrio fischeri (strain ATCC 700601 / ES114) (Vibrio fischeri) protein is 3-dehydroquinate synthase.